The primary structure comprises 509 residues: Methionine--tRNA ligase (509 aa).

Residues 12-22 (YYVNDVPHIGH) carry the 'HIGH' region motif. The short motif at 295 to 299 (KISKS) is the 'KMSKS' region element. Lys-298 contacts ATP.

This sequence belongs to the class-I aminoacyl-tRNA synthetase family. MetG type 2B subfamily. Monomer.

The protein localises to the cytoplasm. The catalysed reaction is tRNA(Met) + L-methionine + ATP = L-methionyl-tRNA(Met) + AMP + diphosphate. In terms of biological role, is required not only for elongation of protein synthesis but also for the initiation of all mRNA translation through initiator tRNA(fMet) aminoacylation. The polypeptide is Methionine--tRNA ligase (Rickettsia bellii (strain RML369-C)).